The following is a 337-amino-acid chain: Mitochondrial metalloendopeptidase OMA1 (337 aa).

The Mitochondrial matrix segment spans residues 1-68 (MFLNKYISNY…QPNPRDKRFQ (68 aa)). The chain crosses the membrane as a helical span at residues 69–89 (WIFGALIAGGGVYYFTHLEYV). Residues 90–337 (PISNRRRFND…MLQSFKEVHW (248 aa)) are Mitochondrial intermembrane-facing. Residue His-195 coordinates Zn(2+). Residue Glu-196 is part of the active site. The Zn(2+) site is built by His-199 and Glu-250. Cys-265 and Cys-321 are oxidised to a cystine.

It belongs to the peptidase M48 family. The cofactor is Zn(2+).

The protein resides in the mitochondrion inner membrane. With respect to regulation, protease activity is induced in response to various mitochondrial stress. In terms of biological role, protease that is part of the quality control system in the inner membrane of mitochondria. Cleaves and thereby promotes the turnover of mistranslated or misfolded membrane protein. In Schizosaccharomyces pombe (strain 972 / ATCC 24843) (Fission yeast), this protein is Mitochondrial metalloendopeptidase OMA1.